The following is a 332-amino-acid chain: uncharacterized protein (332 aa).

The N-terminal stretch at 1-23 is a signal peptide; it reads MKRIPSLIIGLLLILATWHSVLA. Residues 231-251 form a helical membrane-spanning segment; the sequence is SFFLGMIVTLIILAPVILYLW.

The protein resides in the membrane. This is an uncharacterized protein from Pyrococcus horikoshii (strain ATCC 700860 / DSM 12428 / JCM 9974 / NBRC 100139 / OT-3).